The following is a 530-amino-acid chain: AA9 family lytic polysaccharide monooxygenase C (530 aa).

A signal peptide spans 1-18; the sequence is MQLKSTVHFLSLLAYTAA. Residues histidine 19 and histidine 103 each contribute to the Cu(2+) site. Cystine bridges form between cysteine 72-cysteine 190 and cysteine 114-cysteine 118. Asparagine 150 is a glycosylation site (N-linked (GlcNAc...) asparagine). Glutamine 185 serves as a coordination point for O2. Tyrosine 187 is a binding site for Cu(2+). Residues 238–251 show a composition bias toward low complexity; it reads YGSGSSSSQNSVES. 4 disordered regions span residues 238-279, 297-329, 348-375, and 492-512; these read YGSG…STSA, ESSSALDAPKSTDAVKSVEAKETTKVEEVSSSA, YSSASPSSSPVLSSSKPASTSNPEKLSS, and GNGASAAAEPNTGTGSGGTTP. The span at 312–324 shows a compositional bias: basic and acidic residues; sequence KSVEAKETTKVEE. Positions 348–368 are enriched in low complexity; sequence YSSASPSSSPVLSSSKPASTS.

It belongs to the polysaccharide monooxygenase AA9 family. Requires Cu(2+) as cofactor.

The protein localises to the secreted. The catalysed reaction is [(1-&gt;4)-beta-D-glucosyl]n+m + reduced acceptor + O2 = 4-dehydro-beta-D-glucosyl-[(1-&gt;4)-beta-D-glucosyl]n-1 + [(1-&gt;4)-beta-D-glucosyl]m + acceptor + H2O.. Its function is as follows. Lytic polysaccharide monooxygenase (LPMO) that depolymerizes polysaccharides via the oxidation of scissile alpha- or beta-(1-4)-glycosidic bonds, yielding C1 or C4 oxidation products. Catalysis by LPMOs requires the reduction of the active-site copper from Cu(II) to Cu(I) by a reducing agent and H(2)O(2) or O(2) as a cosubstrate. Amorphous cellulose is not a suitable substrate for LPMO9C, which may act at the surface of cellulose microfibrils without any release of soluble products. This Geotrichum candidum (Oospora lactis) protein is AA9 family lytic polysaccharide monooxygenase C.